Reading from the N-terminus, the 459-residue chain is Xylose/arabinose-binding protein XacG (459 aa).

Residues 19 to 36 (ALTVGAAAGIAGCTGGGG) traverse the membrane as a helical segment. A disordered region spans residues 27 to 68 (GIAGCTGGGGTETESTESGNGNGSGGSTDDTETSGSSSGESW).

This sequence belongs to the bacterial solute-binding protein 1 family. In terms of assembly, the complex is composed of two ATP-binding proteins (XacJ and XacK), two transmembrane proteins (XacH and XacI) and a solute-binding protein (XacG).

It localises to the cell membrane. Functionally, part of the ABC transporter complex XacGHIJK involved in the uptake of xylose and arabinose. This is Xylose/arabinose-binding protein XacG from Haloferax volcanii (strain ATCC 29605 / DSM 3757 / JCM 8879 / NBRC 14742 / NCIMB 2012 / VKM B-1768 / DS2) (Halobacterium volcanii).